Here is a 351-residue protein sequence, read N- to C-terminus: Dual-specificity RNA methyltransferase RlmN (351 aa).

The active-site Proton acceptor is Glu90. The Radical SAM core domain maps to 96 to 330 (EKDHYTACLS…ATLRKSKGSD (235 aa)). Cys103 and Cys335 are disulfide-bonded. The [4Fe-4S] cluster site is built by Cys110, Cys114, and Cys117. Residues 162–163 (GE), Ser194, 216–218 (SLH), and Asn292 contribute to the S-adenosyl-L-methionine site. Cys335 acts as the S-methylcysteine intermediate in catalysis.

This sequence belongs to the radical SAM superfamily. RlmN family. [4Fe-4S] cluster serves as cofactor.

It is found in the cytoplasm. It carries out the reaction adenosine(2503) in 23S rRNA + 2 reduced [2Fe-2S]-[ferredoxin] + 2 S-adenosyl-L-methionine = 2-methyladenosine(2503) in 23S rRNA + 5'-deoxyadenosine + L-methionine + 2 oxidized [2Fe-2S]-[ferredoxin] + S-adenosyl-L-homocysteine. It catalyses the reaction adenosine(37) in tRNA + 2 reduced [2Fe-2S]-[ferredoxin] + 2 S-adenosyl-L-methionine = 2-methyladenosine(37) in tRNA + 5'-deoxyadenosine + L-methionine + 2 oxidized [2Fe-2S]-[ferredoxin] + S-adenosyl-L-homocysteine. Specifically methylates position 2 of adenine 2503 in 23S rRNA and position 2 of adenine 37 in tRNAs. m2A2503 modification seems to play a crucial role in the proofreading step occurring at the peptidyl transferase center and thus would serve to optimize ribosomal fidelity. This chain is Dual-specificity RNA methyltransferase RlmN, found in Solidesulfovibrio magneticus (strain ATCC 700980 / DSM 13731 / RS-1) (Desulfovibrio magneticus).